We begin with the raw amino-acid sequence, 1678 residues long: Nuclear pore complex protein Nup98-Nup96 (1678 aa).

Positions 1–11 are enriched in low complexity; the sequence is MFGQNKSFGSS. Disordered regions lie at residues 1 to 41, 68 to 100, 301 to 366, 441 to 473, and 603 to 631; these read MFGQ…QPAN, SSIF…FGST, TTGS…GAPA, FGNT…TQAT, and SKEA…RSVH. Residues 12–22 are compositionally biased toward gly residues; that stretch reads SFGGGSSGSGL. 2 stretches are compositionally biased toward low complexity: residues 23 to 38 and 73 to 83; these read FGQN…LFGQ and SPQQPQNNQSS. Over residues 306–329 the composition is skewed to polar residues; it reads LFGNQQPQTNTGGSLFGNTQNQNQ. Positions 345 to 366 are enriched in low complexity; sequence FGQAQQQPQQQSSGFSFGGAPA. Composition is skewed to polar residues over residues 456–473 and 615–628; these read SQPQ…TQAT and RNST…LTNR. Residues 777-919 form the Peptidase S59 domain; that stretch reads KPDYFSLPTI…GSWVFRVDHF (143 aa). Ser-920 acts as the Nucleophile in catalysis.

Belongs to the nucleoporin GLFG family. In terms of assembly, part of the NPC. The Nup98 and Nup96 chains are autoproteolytically processed from a single precursor protein.

The protein localises to the cytoplasmic granule. Its subcellular location is the nucleus membrane. It is found in the nucleus. The protein resides in the nuclear pore complex. It localises to the nucleus envelope. The protein localises to the chromosome. Functionally, nup98 and Nup96 play a role in the bidirectional transport across the nucleoporin complex (NPC). Required for the nuclear import of hcp-4 during mitotic prophase, this step is essential for centrosome assembly and resolution. Regulates nucleoporin npp-5 localization to the nuclear membrane during interphase and to kinetochores during metaphase. Has a role in P granule integrity; may promote the 'liquid phase' of P granules by increasing the number of interacting RNA-protein complexes. Binds nos-2 mRNA, probably indirectly, and promotes its accumulation in P granules. In Caenorhabditis elegans, this protein is Nuclear pore complex protein Nup98-Nup96.